Consider the following 373-residue polypeptide: Ubiquitin carboxyl-terminal hydrolase 50 (373 aa).

A USP domain is found at 44–364; sequence TGLRNLGNTC…TAYLLFYSCQ (321 aa). Cys53 serves as the catalytic Nucleophile. Catalysis depends on His322, which acts as the Proton acceptor.

It belongs to the peptidase C19 family.

The protein resides in the cytoplasm. The protein localises to the cytoskeleton. It is found in the microtubule organizing center. It localises to the centrosome. Its subcellular location is the nucleus. It carries out the reaction Thiol-dependent hydrolysis of ester, thioester, amide, peptide and isopeptide bonds formed by the C-terminal Gly of ubiquitin (a 76-residue protein attached to proteins as an intracellular targeting signal).. In terms of biological role, deubiquitinating enzyme that removes conjugated ubiquitin from specific proteins to regulate different cellular processes. Regulates the inflammasome signaling pathway by deubiquitinating 'Lys-63'-linked polyubiquitination of the PYCARD/ASC adapter protein. Regulates the ubiquitination and stability of the ACE2 protein. Acts as a negative regulator of the G2/M checkpoint pathway, by preventing serine/threonine kinase WEE1 degradation, thereby repressing entry into mitosis following activation of the G2/M DNA damage checkpoint. The protein is Ubiquitin carboxyl-terminal hydrolase 50 (USP50) of Macaca fascicularis (Crab-eating macaque).